The chain runs to 1032 residues: Chitin synthase 8 (1032 aa).

Pro residues-rich tracts occupy residues 1 to 11 (MRPGDIYPPPQ) and 26 to 41 (PPQP…PPQQ). The interval 1–220 (MRPGDIYPPP…DDDMNDSHPL (220 aa)) is disordered. Polar residues-rich tracts occupy residues 65-78 (MSPT…SRYN), 98-107 (LPTQSLSPFN), and 143-160 (TNPS…SYSY). N-linked (GlcNAc...) asparagine glycosylation is present at Asn78. The segment covering 176–188 (PHHSSQSSVSSIP) has biased composition (low complexity). N-linked (GlcNAc...) asparagine glycans are attached at residues Asn215, Asn304, Asn473, Asn545, and Asn691. 7 helical membrane passes run 728–748 (TLNM…FFVL), 762–782 (VNIP…LLSL), 796–816 (SMVG…FLAV), 842–862 (IVIS…MALE), 870–890 (FFQY…YAFC), 972–992 (VLLV…QASG), and 995–1015 (NSLA…LAFF).

Belongs to the chitin synthase family.

It localises to the cell membrane. The catalysed reaction is [(1-&gt;4)-N-acetyl-beta-D-glucosaminyl](n) + UDP-N-acetyl-alpha-D-glucosamine = [(1-&gt;4)-N-acetyl-beta-D-glucosaminyl](n+1) + UDP + H(+). In terms of biological role, polymerizes chitin, a structural polymer of the cell wall and septum, by transferring the sugar moiety of UDP-GlcNAc to the non-reducing end of the growing chitin polymer. The protein is Chitin synthase 8 of Cryptococcus neoformans var. grubii serotype A (strain H99 / ATCC 208821 / CBS 10515 / FGSC 9487) (Filobasidiella neoformans var. grubii).